Consider the following 571-residue polypeptide: Chitin-inducible gibberellin-responsive protein 1 (571 aa).

Positions 61–77 (TNTPDNQSSTETISAQP) are enriched in polar residues. 2 disordered regions span residues 61–80 (TNTPDNQSSTETISAQPISP) and 151–180 (QRSRTWSHESRQPLPGVGRSQFASGGYPTA). The region spanning 192-571 (ELREDPQIIV…RKLISASAWH (380 aa)) is the GRAS domain. The interval 199-259 (IIVKQLLTRC…VARHGNSGTN (61 aa)) is leucine repeat I (LRI). Residues 278-343 (MRILYNICPY…GGPPRVRITG (66 aa)) form a VHIID region. The VHIID motif lies at 309-313 (IHIID). The leucine repeat II (LRII) stretch occupies residues 359 to 391 (IVGKMLKSMSEEFKIPLEFTPLSVYATQVTKEM). Residues 400–494 (LSVNFTLQLH…QHCLAKDIVN (95 aa)) form a PFYRE region. The SAW stretch occupies residues 497–571 (ACEGKDRVER…RKLISASAWH (75 aa)).

This sequence belongs to the GRAS family.

It is found in the nucleus. Functionally, may play a regulatory role in the early step of oligosaccharide elicitor response, downstream of the membrane-associated high-affinity chitin-binding protein. This is Chitin-inducible gibberellin-responsive protein 1 (CIGR1) from Oryza sativa subsp. japonica (Rice).